Consider the following 306-residue polypeptide: Formimidoylglutamase (306 aa).

Residues 1–13 (MFQNATDWTPTST) are compositionally biased toward polar residues. The disordered stretch occupies residues 1 to 36 (MFQNATDWTPTSTDPRDEQFGGVVEPVPTPSDADDY). Mn(2+)-binding residues include Asn-123, Asp-147, His-149, Asp-151, Asp-234, and Asp-236.

The protein belongs to the arginase family. The cofactor is Mn(2+).

The enzyme catalyses N-formimidoyl-L-glutamate + H2O = formamide + L-glutamate. It functions in the pathway amino-acid degradation; L-histidine degradation into L-glutamate; L-glutamate from N-formimidoyl-L-glutamate (hydrolase route): step 1/1. Functionally, catalyzes the conversion of N-formimidoyl-L-glutamate to L-glutamate and formamide. The sequence is that of Formimidoylglutamase from Halobacterium salinarum (strain ATCC 29341 / DSM 671 / R1).